We begin with the raw amino-acid sequence, 195 residues long: Glucagon family neuropeptides (195 aa).

An N-terminal signal peptide occupies residues 1-20 (MAKSSRATLALLIYGILMRY). A propeptide spanning residues 21–82 (SQCTPIGMGF…YYPPERRAET (62 aa)) is cleaved from the precursor. Residues 113 to 132 (VGEEEEDEEDSEPLSKRHSD) form a disordered region. Over residues 115 to 124 (EEEEDEEDSE) the composition is skewed to acidic residues. Lysine 167 is modified (lysine amide). A propeptide spanning residues 171–195 (LVVPSVWTGIRDTVIITPEKRGKRY) is cleaved from the precursor.

The protein belongs to the glucagon family. In terms of tissue distribution, brain, testis, ovary and stomach. Not pancreas, pituitary, muscle and liver.

It localises to the secreted. Functionally, primary role of GHRH is to release GH from the pituitary. In terms of biological role, PACAP plays pivotal roles as a neurotransmitter and/or a neuromodulator. The chain is Glucagon family neuropeptides from Clarias macrocephalus (Bighead catfish).